The primary structure comprises 108 residues: Large ribosomal subunit protein bL21 (108 aa).

It belongs to the bacterial ribosomal protein bL21 family. In terms of assembly, part of the 50S ribosomal subunit. Contacts protein L20.

Functionally, this protein binds to 23S rRNA in the presence of protein L20. The protein is Large ribosomal subunit protein bL21 of Buchnera aphidicola subsp. Acyrthosiphon pisum (strain 5A).